A 600-amino-acid chain; its full sequence is MCGIVGYIGQLDAKEILLKGLEKLEYRGYDSAGIAVANEQGIHVFKEKGRIADLREVVDANVEAKAGIGHTRWATHGEPSYLNAHPHQSALGRFTLVHNGVIENYVQLKQEYLQDVELKSDTDTEVVVQVIEQFVNGGLETEEAFRKTLTLLKGSYAIALFDNDNRETIFVAKNKSPLLVGLGDTFNVVASDAMAMLQVTNEYVELMDKEMVIVTDDQVVIKNLDGDVITRASYIAELDASDIEKGTYPHYMLKETDEQPVVMRKIIQTYQDENGKLSVPGDIAAAVAEADRIYIIGCGTSYHAGLVGKQYIEMWANVPVEVHVASEFSYNMPLLSKKPLFIFLSQSGETADSRAVLVQVKALGHKALTITNVPGSTLSREADYTLLLHAGPEIAVASTKAYTAQIAVLAVLASVAADKNGINIGFDLVKELGIAANAMEALCDQKDEMEMIAREYLTVSRNAFFIGRGLDYFVCVEGALKLKEISYIQAEGFAGGELKHGTIALIEQGTPVFALATQEHVNLSIRGNVKEVAARGANTCIISLKGLDDADDRFVLPEVNPALAPLVSVVPLQLIAYYAALHRGCDVDKPRNLAKSVTVE.

Catalysis depends on cysteine 2, which acts as the Nucleophile; for GATase activity. The region spanning 2–217 is the Glutamine amidotransferase type-2 domain; sequence CGIVGYIGQL…DKEMVIVTDD (216 aa). 2 SIS domains span residues 283-422 and 452-590; these read IAAA…KNGI and IARE…VDKP. Catalysis depends on lysine 595, which acts as the For Fru-6P isomerization activity.

As to quaternary structure, homodimer.

The protein resides in the cytoplasm. The catalysed reaction is D-fructose 6-phosphate + L-glutamine = D-glucosamine 6-phosphate + L-glutamate. In terms of biological role, catalyzes the first step in hexosamine metabolism, converting fructose-6P into glucosamine-6P using glutamine as a nitrogen source. The polypeptide is Glutamine--fructose-6-phosphate aminotransferase [isomerizing] (Bacillus subtilis (strain 168)).